Here is a 182-residue protein sequence, read N- to C-terminus: Bifunctional protein PyrR (182 aa).

Positions 99 to 111 match the PRPP-binding motif; the sequence is IVLVDDVLFTGRT.

It belongs to the purine/pyrimidine phosphoribosyltransferase family. PyrR subfamily. In terms of assembly, homodimer and homohexamer; in equilibrium.

It carries out the reaction UMP + diphosphate = 5-phospho-alpha-D-ribose 1-diphosphate + uracil. In terms of biological role, regulates transcriptional attenuation of the pyrimidine nucleotide (pyr) operon by binding in a uridine-dependent manner to specific sites on pyr mRNA. This disrupts an antiterminator hairpin in the RNA and favors formation of a downstream transcription terminator, leading to a reduced expression of downstream genes. Its function is as follows. Also displays a weak uracil phosphoribosyltransferase activity which is not physiologically significant. The sequence is that of Bifunctional protein PyrR from Caldicellulosiruptor bescii (strain ATCC BAA-1888 / DSM 6725 / KCTC 15123 / Z-1320) (Anaerocellum thermophilum).